Here is a 240-residue protein sequence, read N- to C-terminus: DNA repair protein RecO (240 aa).

It belongs to the RecO family.

Functionally, involved in DNA repair and RecF pathway recombination. The polypeptide is DNA repair protein RecO (Wolbachia sp. subsp. Drosophila simulans (strain wRi)).